The chain runs to 473 residues: Siroheme synthase 2 (473 aa).

The interval 1–204 (MDYFPIFCQL…NDHVQADQHV (204 aa)) is precorrin-2 dehydrogenase /sirohydrochlorin ferrochelatase. Residues 22 to 23 (EI) and 43 to 44 (CE) each bind NAD(+). At S128 the chain carries Phosphoserine. Residues 216-473 (GEVVLVGAGP…KVTECVAHVG (258 aa)) form a uroporphyrinogen-III C-methyltransferase region. S-adenosyl-L-methionine is bound at residue P225. D248 acts as the Proton acceptor in catalysis. K270 (proton donor) is an active-site residue. S-adenosyl-L-methionine is bound by residues 301 to 303 (GGD), I306, 331 to 332 (TA), M382, and G411.

This sequence in the N-terminal section; belongs to the precorrin-2 dehydrogenase / sirohydrochlorin ferrochelatase family. The protein in the C-terminal section; belongs to the precorrin methyltransferase family.

The catalysed reaction is uroporphyrinogen III + 2 S-adenosyl-L-methionine = precorrin-2 + 2 S-adenosyl-L-homocysteine + H(+). It catalyses the reaction precorrin-2 + NAD(+) = sirohydrochlorin + NADH + 2 H(+). It carries out the reaction siroheme + 2 H(+) = sirohydrochlorin + Fe(2+). It functions in the pathway cofactor biosynthesis; adenosylcobalamin biosynthesis; precorrin-2 from uroporphyrinogen III: step 1/1. It participates in cofactor biosynthesis; adenosylcobalamin biosynthesis; sirohydrochlorin from precorrin-2: step 1/1. The protein operates within porphyrin-containing compound metabolism; siroheme biosynthesis; precorrin-2 from uroporphyrinogen III: step 1/1. Its pathway is porphyrin-containing compound metabolism; siroheme biosynthesis; siroheme from sirohydrochlorin: step 1/1. It functions in the pathway porphyrin-containing compound metabolism; siroheme biosynthesis; sirohydrochlorin from precorrin-2: step 1/1. Its function is as follows. Multifunctional enzyme that catalyzes the SAM-dependent methylations of uroporphyrinogen III at position C-2 and C-7 to form precorrin-2 via precorrin-1. Then it catalyzes the NAD-dependent ring dehydrogenation of precorrin-2 to yield sirohydrochlorin. Finally, it catalyzes the ferrochelation of sirohydrochlorin to yield siroheme. This Yersinia pseudotuberculosis serotype O:1b (strain IP 31758) protein is Siroheme synthase 2.